The primary structure comprises 452 residues: Adenylosuccinate synthetase (452 aa).

GTP-binding positions include 40-46 and 68-70; these read GDEGKGK and GHT. Asp41 serves as the catalytic Proton acceptor. Mg(2+)-binding residues include Asp41 and Gly68. IMP is bound by residues 41 to 44, 66 to 69, Thr158, Arg172, Asn250, Thr265, and Arg329; these read DEGK and NAGH. The active-site Proton donor is His69. 325–331 is a substrate binding site; sequence VTTKRKR. Residues Arg331, 357-359, and 440-442 contribute to the GTP site; these read KLD and GVG.

It belongs to the adenylosuccinate synthetase family. Homodimer. Requires Mg(2+) as cofactor.

It localises to the cytoplasm. The enzyme catalyses IMP + L-aspartate + GTP = N(6)-(1,2-dicarboxyethyl)-AMP + GDP + phosphate + 2 H(+). Its pathway is purine metabolism; AMP biosynthesis via de novo pathway; AMP from IMP: step 1/2. Functionally, plays an important role in the de novo pathway and in the salvage pathway of purine nucleotide biosynthesis. Catalyzes the first committed step in the biosynthesis of AMP from IMP. In Drosophila grimshawi (Hawaiian fruit fly), this protein is Adenylosuccinate synthetase.